The following is a 414-amino-acid chain: Probable aminotransferase TAT2 (414 aa).

Belongs to the class-I pyridoxal-phosphate-dependent aminotransferase family. Pyridoxal 5'-phosphate serves as cofactor.

The chain is Probable aminotransferase TAT2 from Arabidopsis thaliana (Mouse-ear cress).